Here is a 132-residue protein sequence, read N- to C-terminus: L-ectoine synthase (132 aa).

It belongs to the ectoine synthase family.

The enzyme catalyses (2S)-4-acetamido-2-aminobutanoate = L-ectoine + H2O. It participates in amine and polyamine biosynthesis; ectoine biosynthesis; L-ectoine from L-aspartate 4-semialdehyde: step 3/3. Its function is as follows. Catalyzes the circularization of gamma-N-acetyl-alpha,gamma-diaminobutyric acid (ADABA) to ectoine (1,4,5,6-tetrahydro-2-methyl-4-pyrimidine carboxylic acid), which is an excellent osmoprotectant. This is L-ectoine synthase from Rhodococcus erythropolis (strain PR4 / NBRC 100887).